The primary structure comprises 530 residues: Arginine--tRNA ligase (530 aa).

The 'HIGH' region motif lies at 113-123 (ANPTGPLHIGH).

It belongs to the class-I aminoacyl-tRNA synthetase family. As to quaternary structure, monomer.

It is found in the cytoplasm. It carries out the reaction tRNA(Arg) + L-arginine + ATP = L-arginyl-tRNA(Arg) + AMP + diphosphate. The protein is Arginine--tRNA ligase of Campylobacter jejuni subsp. jejuni serotype O:23/36 (strain 81-176).